The following is a 199-amino-acid chain: Insertion sequence IS21-like putative ATP-binding protein (199 aa).

114 to 121 (GDSGTGKT) is an ATP binding site.

This sequence belongs to the IS21/IS1162 putative ATP-binding protein family.

The chain is Insertion sequence IS21-like putative ATP-binding protein (tnpB) from Bacteroides fragilis (strain YCH46).